Here is a 340-residue protein sequence, read N- to C-terminus: Ferrochelatase (340 aa).

Residues histidine 202 and glutamate 283 each coordinate Fe cation.

The protein belongs to the ferrochelatase family.

Its subcellular location is the cytoplasm. The catalysed reaction is heme b + 2 H(+) = protoporphyrin IX + Fe(2+). It functions in the pathway porphyrin-containing compound metabolism; protoheme biosynthesis; protoheme from protoporphyrin-IX: step 1/1. Catalyzes the ferrous insertion into protoporphyrin IX. The polypeptide is Ferrochelatase (Acinetobacter baylyi (strain ATCC 33305 / BD413 / ADP1)).